A 566-amino-acid chain; its full sequence is DDB1- and CUL4-associated factor 10 (566 aa).

2 disordered regions span residues 1–72 (MFPF…AERA) and 87–123 (TASA…GAGL). A phosphoserine mark is found at serine 50, serine 57, serine 67, serine 96, serine 99, and serine 100. Over residues 87–100 (TASASQAKLSPSSS) the composition is skewed to low complexity. Arginine 141 carries the omega-N-methylarginine modification. 4 WD repeats span residues 173–212 (RTHG…HIKT), 216–254 (AHED…TKVC), 258–297 (GHTS…EDGC), and 303–342 (FHTR…KSLE). Positions 354–374 (TTSSSDLTTTSSSSGSRVSGS) are enriched in low complexity. Positions 354 to 413 (TTSSSDLTTTSSSSGSRVSGSPCHHNDSNSTEKHMSRASQREGVSPRNSLEVLTPEVPGE) are disordered. Residue serine 356 is modified to Phosphoserine. Positions 377 to 388 (HHNDSNSTEKHM) are enriched in basic and acidic residues. WD repeat units follow at residues 415–455 (DRGN…QEGA), 477–515 (VGRG…SELV), and 533–566 (SHND…QPKF).

It belongs to the WD repeat DCAF10 family. As to quaternary structure, interacts with DDB1.

It functions in the pathway protein modification; protein ubiquitination. Its function is as follows. May function as a substrate receptor for CUL4-DDB1 E3 ubiquitin-protein ligase complex. The polypeptide is DDB1- and CUL4-associated factor 10 (Dcaf10) (Mus musculus (Mouse)).